The sequence spans 148 residues: Protein SprT-like (148 aa).

Residues 6-147 (LQQLVATISM…CGRCQGPIKL (142 aa)) enclose the SprT-like domain. A Zn(2+)-binding site is contributed by histidine 67. Glutamate 68 is an active-site residue. Position 71 (histidine 71) interacts with Zn(2+).

This sequence belongs to the SprT family. The cofactor is Zn(2+).

It localises to the cytoplasm. The polypeptide is Protein SprT-like (Lactiplantibacillus plantarum (strain ATCC BAA-793 / NCIMB 8826 / WCFS1) (Lactobacillus plantarum)).